Consider the following 327-residue polypeptide: tRNA uridine(34) hydroxylase (327 aa).

The Rhodanese domain occupies 130–224 (LDEDTVVLDT…YGKDPEVRGE (95 aa)). Cys-184 serves as the catalytic Cysteine persulfide intermediate.

This sequence belongs to the TrhO family.

It carries out the reaction uridine(34) in tRNA + AH2 + O2 = 5-hydroxyuridine(34) in tRNA + A + H2O. Its function is as follows. Catalyzes oxygen-dependent 5-hydroxyuridine (ho5U) modification at position 34 in tRNAs. In Streptococcus suis (strain 98HAH33), this protein is tRNA uridine(34) hydroxylase.